We begin with the raw amino-acid sequence, 689 residues long: Glycine--tRNA ligase beta subunit (689 aa).

Belongs to the class-II aminoacyl-tRNA synthetase family. Tetramer of two alpha and two beta subunits.

The protein localises to the cytoplasm. It carries out the reaction tRNA(Gly) + glycine + ATP = glycyl-tRNA(Gly) + AMP + diphosphate. The chain is Glycine--tRNA ligase beta subunit from Pectobacterium atrosepticum (strain SCRI 1043 / ATCC BAA-672) (Erwinia carotovora subsp. atroseptica).